A 506-amino-acid chain; its full sequence is Cysteine--tRNA ligase (506 aa).

Cys34 provides a ligand contact to Zn(2+). A 'HIGH' region motif is present at residues 36–46 (PTVYDFAHIGN). Zn(2+) is bound by residues Cys230, His269, and Glu273. The 'KMSKS' region signature appears at 302–306 (KMSKS). Lys305 is a binding site for ATP.

This sequence belongs to the class-I aminoacyl-tRNA synthetase family. In terms of assembly, monomer. Requires Zn(2+) as cofactor.

It localises to the cytoplasm. It catalyses the reaction tRNA(Cys) + L-cysteine + ATP = L-cysteinyl-tRNA(Cys) + AMP + diphosphate. The protein is Cysteine--tRNA ligase of Brucella suis biovar 1 (strain 1330).